A 357-amino-acid chain; its full sequence is AA9 family lytic polysaccharide monooxygenase B (357 aa).

Positions 1–18 (MKFSSVLALAASAKLVAS) are cleaved as a signal peptide. Residues H19 and H101 each coordinate Cu(2+). The tract at residues 19 to 234 (HATVFAVWIN…IPGPAVWDGA (216 aa)) is catalytic. An intrachain disulfide couples C61 to C182. Positions 168 and 177 each coordinate O2. Y179 provides a ligand contact to Cu(2+). Residues 235 to 318 (SSGSGSSGSG…SAAPTGGTGT (84 aa)) form a ser/Thr-rich linker region. The interval 292-317 (SVRPTTSAAPTTSAPTSSAAPTGGTG) is disordered. Over residues 295 to 313 (PTTSAAPTTSAPTSSAAPT) the composition is skewed to low complexity. Residues 319–355 (GSIQIYQQCGGMNYKGATGCASGLTCKQWNPYYHQCV) enclose the CBM1 domain.

This sequence belongs to the polysaccharide monooxygenase AA9 family. Cu(2+) is required as a cofactor.

Its subcellular location is the secreted. The catalysed reaction is [(1-&gt;4)-beta-D-glucosyl]n+m + reduced acceptor + O2 = 4-dehydro-beta-D-glucosyl-[(1-&gt;4)-beta-D-glucosyl]n-1 + [(1-&gt;4)-beta-D-glucosyl]m + acceptor + H2O.. Its function is as follows. Lytic polysaccharide monooxygenase (LPMO) that depolymerizes crystalline and amorphous polysaccharides via the oxidation of scissile alpha- or beta-(1-4)-glycosidic bonds, yielding C4 oxidation products. Catalysis by LPMOs requires the reduction of the active-site copper from Cu(II) to Cu(I) by a reducing agent and H(2)O(2) or O(2) as a cosubstrate. Active on carboxymethylcellulose (CMC), hydroxyethylcellulose (HEC) and beta-glucan. Also active on soluble cellohexaose, a property that is restricted to only a few characterized LPMOs. The chain is AA9 family lytic polysaccharide monooxygenase B from Emericella nidulans (strain FGSC A4 / ATCC 38163 / CBS 112.46 / NRRL 194 / M139) (Aspergillus nidulans).